The sequence spans 245 residues: Complement C1q subcomponent subunit A (245 aa).

Positions 1-22 (METSQGWLVACVLAVTLVWTVA) are cleaved as a signal peptide. A Collagen-like domain is found at 31 to 109 (GKDGVAGIPG…KGVKGNPGNI (79 aa)). The segment at 35 to 111 (VAGIPGRPGR…VKGNPGNIRD (77 aa)) is disordered. 4-hydroxyproline occurs at positions 39 and 45. 5-hydroxylysine is present on Lys-48. Lys-48 is a glycosylation site (O-linked (Gal...) hydroxylysine). Pro-54 is modified (4-hydroxyproline). A 5-hydroxylysine modification is found at Lys-67. O-linked (Gal...) hydroxylysine glycosylation occurs at Lys-67. 4-hydroxyproline occurs at positions 79 and 85. The residue at position 100 (Lys-100) is a 5-hydroxylysine. An O-linked (Gal...) hydroxylysine glycan is attached at Lys-100. The region spanning 110 to 245 (RDQPRPAFSA…FSGFLIFPSA (136 aa)) is the C1q domain. N-linked (GlcNAc...) asparagine glycosylation occurs at Asn-146. Cys-172 and Cys-190 form a disulfide bridge. Gln-199 is a binding site for Ca(2+).

Core component of the complement C1 complex, a calcium-dependent complex composed of 1 molecule of the C1Q subcomplex, 2 molecules of C1R and 2 molecules of C1S. The C1Q subcomplex is composed 18 subunits: 3 chains of C1QA, C1QB, and C1QC trimerize to form 6 collagen-like triple helices connected to six globular ligand-recognition modules (C1q domain). Interacts with CR1 (via Sushi 24 and Sushi 25 domains). Interacts (via C-terminus) with CD33; this interaction activates CD33 inhibitory motifs. O-linked glycans are assumed to be the Glc-Gal disaccharides typically found as secondary modifications of hydroxylated lysines in collagen-like domains.

The protein resides in the secreted. It localises to the cell surface. The C1Q subcomplex is inhibited by sulfated molecules, such as triterpenoid sulfates, heparan sulfate, or chondroitin sulfates. Functionally, core component of the complement C1 complex, a multiprotein complex that initiates the classical pathway of the complement system, a cascade of proteins that leads to phagocytosis and breakdown of pathogens and signaling that strengthens the adaptive immune system. The classical complement pathway is initiated by the C1Q subcomplex of the C1 complex, which specifically binds IgG or IgM immunoglobulins complexed with antigens, forming antigen-antibody complexes on the surface of pathogens: C1QA, together with C1QB and C1QC, specifically recognizes and binds the Fc regions of IgG or IgM via its C1q domain. Immunoglobulin-binding activates the proenzyme C1R, which cleaves C1S, initiating the proteolytic cascade of the complement system. The C1Q subcomplex is activated by a hexamer of IgG complexed with antigens, while it is activated by a pentameric IgM. The C1Q subcomplex also recognizes and binds phosphatidylserine exposed on the surface of cells undergoing programmed cell death, possibly promoting activation of the complement system. This is Complement C1q subcomponent subunit A from Rattus norvegicus (Rat).